Consider the following 90-residue polypeptide: Molybdopterin synthase sulfur carrier subunit (90 aa).

Glycine 90 carries the post-translational modification 1-thioglycine; alternate. Glycine 90 carries the glycyl adenylate; alternate modification.

It belongs to the MoaD family. MOCS2A subfamily. Heterotetramer; composed of 2 small (Mocs2A) and 2 large (Mocs2B) subunits. In terms of processing, C-terminal thiocarboxylation occurs in 2 steps, it is first acyl-adenylated (-COAMP) via the hesA/moeB/thiF part of MOCS3, then thiocarboxylated (-COSH) via the rhodanese domain of MOCS3.

It is found in the cytoplasm. Its pathway is cofactor biosynthesis; molybdopterin biosynthesis. Acts as a sulfur carrier required for molybdopterin biosynthesis. Component of the molybdopterin synthase complex that catalyzes the conversion of precursor Z into molybdopterin by mediating the incorporation of 2 sulfur atoms into precursor Z to generate a dithiolene group. In the complex, serves as sulfur donor by being thiocarboxylated (-COSH) at its C-terminus by MOCS3. After interaction with Mocs2B, the sulfur is then transferred to precursor Z to form molybdopterin. Involved during biosynthesis of the molybdenum cofactor. The sequence is that of Molybdopterin synthase sulfur carrier subunit from Drosophila melanogaster (Fruit fly).